A 374-amino-acid chain; its full sequence is Dual-specificity RNA methyltransferase RlmN (374 aa).

Glutamate 91 acts as the Proton acceptor in catalysis. One can recognise a Radical SAM core domain in the interval 97–340 (EDDRGTLCVS…TTVRKTRGDD (244 aa)). The cysteines at positions 104 and 345 are disulfide-linked. 3 residues coordinate [4Fe-4S] cluster: cysteine 111, cysteine 115, and cysteine 118. S-adenosyl-L-methionine contacts are provided by residues 166-167 (GE), serine 198, 220-222 (SLH), and asparagine 302. Residue cysteine 345 is the S-methylcysteine intermediate of the active site.

Belongs to the radical SAM superfamily. RlmN family. Requires [4Fe-4S] cluster as cofactor.

It localises to the cytoplasm. The catalysed reaction is adenosine(2503) in 23S rRNA + 2 reduced [2Fe-2S]-[ferredoxin] + 2 S-adenosyl-L-methionine = 2-methyladenosine(2503) in 23S rRNA + 5'-deoxyadenosine + L-methionine + 2 oxidized [2Fe-2S]-[ferredoxin] + S-adenosyl-L-homocysteine. The enzyme catalyses adenosine(37) in tRNA + 2 reduced [2Fe-2S]-[ferredoxin] + 2 S-adenosyl-L-methionine = 2-methyladenosine(37) in tRNA + 5'-deoxyadenosine + L-methionine + 2 oxidized [2Fe-2S]-[ferredoxin] + S-adenosyl-L-homocysteine. Functionally, specifically methylates position 2 of adenine 2503 in 23S rRNA and position 2 of adenine 37 in tRNAs. m2A2503 modification seems to play a crucial role in the proofreading step occurring at the peptidyl transferase center and thus would serve to optimize ribosomal fidelity. The polypeptide is Dual-specificity RNA methyltransferase RlmN (Delftia acidovorans (strain DSM 14801 / SPH-1)).